Here is a 267-residue protein sequence, read N- to C-terminus: Shikimate dehydrogenase (NADP(+)) (267 aa).

Shikimate-binding positions include 14–16 (SLS) and T61. K65 acts as the Proton acceptor in catalysis. 2 residues coordinate shikimate: N86 and D101. Residues 126–130 (GAGGA), 150–155 (NRTPFK), and L213 each bind NADP(+). Shikimate is bound at residue Y215. G236 is an NADP(+) binding site.

This sequence belongs to the shikimate dehydrogenase family. Homodimer.

The enzyme catalyses shikimate + NADP(+) = 3-dehydroshikimate + NADPH + H(+). The protein operates within metabolic intermediate biosynthesis; chorismate biosynthesis; chorismate from D-erythrose 4-phosphate and phosphoenolpyruvate: step 4/7. In terms of biological role, involved in the biosynthesis of the chorismate, which leads to the biosynthesis of aromatic amino acids. Catalyzes the reversible NADPH linked reduction of 3-dehydroshikimate (DHSA) to yield shikimate (SA). The protein is Shikimate dehydrogenase (NADP(+)) of Ruthia magnifica subsp. Calyptogena magnifica.